Here is a 233-residue protein sequence, read N- to C-terminus: MAKLTKRARLIREKVEVTKNYDINEAVALLKELATAKFVESVDVAVNLGVDPRKSDQNVRGATVLPHGTGREVRVAVFTQGANAEAATAAGAELVGMDELAAQVKAGEMNFDVVIASPDAMRVVGQLGQILGPRGLMPNPKTGTVTPNVAEAVKNAKAGQVRYRTDKNGIIHTTIGKVDFETVQLKENLEALIGALVKAKPASAKGVFLKKVSISTTMGAGVAVDQATLAKAL.

Belongs to the universal ribosomal protein uL1 family. As to quaternary structure, part of the 50S ribosomal subunit.

Its function is as follows. Binds directly to 23S rRNA. The L1 stalk is quite mobile in the ribosome, and is involved in E site tRNA release. Protein L1 is also a translational repressor protein, it controls the translation of the L11 operon by binding to its mRNA. The sequence is that of Large ribosomal subunit protein uL1 from Shewanella woodyi (strain ATCC 51908 / MS32).